The primary structure comprises 125 residues: Monothiol glutaredoxin-S2 (125 aa).

Residues 28-124 enclose the Glutaredoxin domain; sequence AERVGRLVRE…PRLREVGALC (97 aa). Residue cysteine 48 coordinates [2Fe-2S] cluster.

It belongs to the glutaredoxin family. CC-type subfamily.

It localises to the cytoplasm. Its function is as follows. May only reduce GSH-thiol disulfides, but not protein disulfides. The protein is Monothiol glutaredoxin-S2 (GRXS2) of Oryza sativa subsp. japonica (Rice).